A 223-amino-acid polypeptide reads, in one-letter code: Phosphoribosylformylglycinamidine synthase subunit PurQ (223 aa).

In terms of domain architecture, Glutamine amidotransferase type-1 spans 3 to 223; sequence FAVLVFPGSN…MVKSWREQHV (221 aa). The active-site Nucleophile is Cys-85. Catalysis depends on residues His-193 and Glu-195.

As to quaternary structure, part of the FGAM synthase complex composed of 1 PurL, 1 PurQ and 2 PurS subunits.

Its subcellular location is the cytoplasm. It carries out the reaction N(2)-formyl-N(1)-(5-phospho-beta-D-ribosyl)glycinamide + L-glutamine + ATP + H2O = 2-formamido-N(1)-(5-O-phospho-beta-D-ribosyl)acetamidine + L-glutamate + ADP + phosphate + H(+). The enzyme catalyses L-glutamine + H2O = L-glutamate + NH4(+). It participates in purine metabolism; IMP biosynthesis via de novo pathway; 5-amino-1-(5-phospho-D-ribosyl)imidazole from N(2)-formyl-N(1)-(5-phospho-D-ribosyl)glycinamide: step 1/2. Functionally, part of the phosphoribosylformylglycinamidine synthase complex involved in the purines biosynthetic pathway. Catalyzes the ATP-dependent conversion of formylglycinamide ribonucleotide (FGAR) and glutamine to yield formylglycinamidine ribonucleotide (FGAM) and glutamate. The FGAM synthase complex is composed of three subunits. PurQ produces an ammonia molecule by converting glutamine to glutamate. PurL transfers the ammonia molecule to FGAR to form FGAM in an ATP-dependent manner. PurS interacts with PurQ and PurL and is thought to assist in the transfer of the ammonia molecule from PurQ to PurL. The protein is Phosphoribosylformylglycinamidine synthase subunit PurQ of Staphylococcus aureus (strain USA300).